We begin with the raw amino-acid sequence, 379 residues long: Cytochrome b (379 aa).

The next 4 helical transmembrane spans lie at 33–53 (FGSL…FLAM), 77–98 (WLIR…SIHA), 113–133 (WNIG…GYVL), and 178–198 (FFAF…VHLL). Residues histidine 83 and histidine 97 each contribute to the heme b site. Residues histidine 182 and histidine 196 each coordinate heme b. Histidine 201 is an a ubiquinone binding site. A run of 4 helical transmembrane segments spans residues 226-246 (IKDL…ALFF), 288-308 (LGGV…PLLN), 320-340 (ITQT…WIGG), and 347-367 (FTMI…ILMP).

This sequence belongs to the cytochrome b family. In terms of assembly, the cytochrome bc1 complex contains 11 subunits: 3 respiratory subunits (MT-CYB, CYC1 and UQCRFS1), 2 core proteins (UQCRC1 and UQCRC2) and 6 low-molecular weight proteins (UQCRH/QCR6, UQCRB/QCR7, UQCRQ/QCR8, UQCR10/QCR9, UQCR11/QCR10 and a cleavage product of UQCRFS1). This cytochrome bc1 complex then forms a dimer. Heme b serves as cofactor.

The protein resides in the mitochondrion inner membrane. Its function is as follows. Component of the ubiquinol-cytochrome c reductase complex (complex III or cytochrome b-c1 complex) that is part of the mitochondrial respiratory chain. The b-c1 complex mediates electron transfer from ubiquinol to cytochrome c. Contributes to the generation of a proton gradient across the mitochondrial membrane that is then used for ATP synthesis. This is Cytochrome b (MT-CYB) from Thaptomys nigrita (Blackish grass mouse).